A 506-amino-acid polypeptide reads, in one-letter code: uncharacterized protein (506 aa).

The protein belongs to the Mg-chelatase subunits D/I family. ComM subfamily.

This is an uncharacterized protein from Escherichia coli (strain K12).